The primary structure comprises 310 residues: uncharacterized protein (310 aa).

The HTH lysR-type domain maps to 5–62 (FTEENLLAFTTAARFGSFSKAAEELGLTTSAISYTIKRMETGLDVVLFTRSTRSIELT). The segment at residues 22 to 42 (FSKAAEELGLTTSAISYTIKR) is a DNA-binding region (H-T-H motif).

This sequence belongs to the LysR transcriptional regulatory family.

This is an uncharacterized protein from Escherichia coli (strain K12).